We begin with the raw amino-acid sequence, 301 residues long: Probable deoxyhypusine synthase 1 (301 aa).

Lys-269 functions as the Nucleophile in the catalytic mechanism.

Belongs to the deoxyhypusine synthase family. NAD(+) is required as a cofactor.

The enzyme catalyses [eIF5A protein]-L-lysine + spermidine = [eIF5A protein]-deoxyhypusine + propane-1,3-diamine. It participates in protein modification; eIF5A hypusination. Its function is as follows. Catalyzes the NAD-dependent oxidative cleavage of spermidine and the subsequent transfer of the butylamine moiety of spermidine to the epsilon-amino group of a specific lysine residue of the eIF-5A precursor protein to form the intermediate deoxyhypusine residue. The polypeptide is Probable deoxyhypusine synthase 1 (dys1) (Archaeoglobus fulgidus (strain ATCC 49558 / DSM 4304 / JCM 9628 / NBRC 100126 / VC-16)).